A 185-amino-acid chain; its full sequence is MISGSDLRKGTTFELDGQVYTVIDFLHVKPGKGAAFVRTKLRNVIMGGVTDRTFNPTDKLQEAIIERKEMQYLYSDGELYYFMDQETFEQIPLNHEKVEDAIKFLKENMNAVIKFYKGEAFSVEAPNFVELLITECEPSVKGNTATTAMKTAVVETGATVMVPMFVEEGNTIRIDTRTGEYMERV.

It belongs to the elongation factor P family.

The protein resides in the cytoplasm. It functions in the pathway protein biosynthesis; polypeptide chain elongation. Involved in peptide bond synthesis. Stimulates efficient translation and peptide-bond synthesis on native or reconstituted 70S ribosomes in vitro. Probably functions indirectly by altering the affinity of the ribosome for aminoacyl-tRNA, thus increasing their reactivity as acceptors for peptidyl transferase. The sequence is that of Elongation factor P from Clostridium perfringens (strain ATCC 13124 / DSM 756 / JCM 1290 / NCIMB 6125 / NCTC 8237 / Type A).